The primary structure comprises 83 residues: MIKVNVLYFGAVREACDETPREEVEVQNGTDVGNLVDQLQQKYPRLRDHCQRVQMAVNQFIAPLSTVLGDGDEVAFIPQVAGG.

Belongs to the MoaD family.

It functions in the pathway cofactor biosynthesis; molybdopterin biosynthesis. Involved in sulfur transfer in the conversion of molybdopterin precursor Z to molybdopterin. Probably plays a role in host phagosome maturation arrest. This Mycobacterium tuberculosis (strain ATCC 25618 / H37Rv) protein is Molybdopterin synthase sulfur carrier subunit (moaD1).